The following is a 441-amino-acid chain: Chitinase-like protein Idgf3 (441 aa).

Residues 1-23 (MTGSLWLSLALSLAVLAQFKVSA) form the signal peptide. One can recognise a GH18 domain in the interval 25–441 (PNLVCFYDSQ…MLRAIKYRLL (417 aa)). C29 and C56 are disulfide-bonded. N221 is a glycosylation site (N-linked (GlcNAc...) asparagine). The disordered stretch occupies residues 309 to 331 (SGDSGMPVVPSTQGPAPAGPQSK). A disulfide bridge connects residues C342 and C425.

It belongs to the glycosyl hydrolase 18 family. IDGF subfamily. In terms of processing, glycosylated.

The protein resides in the secreted. Cooperates with insulin-like peptides to stimulate the proliferation, polarization and motility of imaginal disk cells. May act by stabilizing the binding of insulin-like peptides to its receptor through a simultaneous interaction with both molecules to form a multiprotein signaling complex. This is Chitinase-like protein Idgf3 (Idgf3) from Drosophila yakuba (Fruit fly).